The chain runs to 274 residues: Short-chain dehydrogenase/reductase bsc3 (274 aa).

NADP(+) is bound by residues Ile14, Tyr170, Lys174, Ile203, and Thr205. Tyr170 serves as the catalytic Proton donor. Lys174 acts as the Lowers pKa of active site Tyr in catalysis.

Belongs to the short-chain dehydrogenases/reductases (SDR) family.

The protein operates within mycotoxin biosynthesis. Functionally, short-chain dehydrogenase/reductase; part of the gene cluster that mediates the biosynthesis of the diterpene glucoside brassicicene C. In the first step of the brassicicene C biosynthesis, the bifunctional diterpene synthase bsc8 that possesses both prenyl transferase and terpene cyclase activity, converts isopentenyl diphosphate and dimethylallyl diphosphate into geranylgeranyl diphosphate (GGDP) that is further converted into fusicocca-2,10(14)-diene, the first precursor for brassicicene C. Fusicocca-2,10(14)-diene is then substrate of cytochrome P450 monooxygenase bsc1 for hydroxylation at the C-8 position. Oxidation at C-16 position to aldehyde is then catalyzed by the cytochrome P450 monooyxygenase bsc7, yielding fusicocca-2,10(14)-diene-8-beta,16-diol. Follows the isomerization of the double bond and reduction of aldehyde to alcohol catalyzed by the short-chain dehydrogenase/reductase bsc3 to yield the diol compound fusicocca-1,10(14)-diene-8 beta,16-diol. The next step is the oxidation at the C-3 position of fusicocca-2,10(14)-diene-8-beta,16-diol catalyzed by the alpha-ketoglutarate dependent dioxygenase bsc9, to produce a triol compound. Methylation of the hydroxy group at position 16 is performed by the methyltransferase bsc6. 16-O-methylation is followed by oxidation at the C-13 position to ketone and an alkyl shift of the methyl group leads to brassicicene C. Although the probable acetyltransferase bsc4 is included in the gene cluster, no acetylation reactions are necessary for brassicicene C biosynthesis. However, the fact that brassicicene E, which is a structurally related compound having an acetoxy group at position 12, was previously isolated from another strain of A.brassicicola suggests that the ATCC 96836 strain might also produce a small amount of brassicicene E. This Alternaria brassicicola (Dark leaf spot agent) protein is Short-chain dehydrogenase/reductase bsc3.